We begin with the raw amino-acid sequence, 447 residues long: MTRFDENARSPWTPLHDVKTVELFPLNQRLDGSITLPGSKSLTNRALIISALANSDSMLTGMLKSDDTYWCIQALKRLGVQINVQGETTSIRGIGGQWKSSSLYIGAAGTLARFLLGALAISRSGNWEIEASQSMSKRPIEPLVGVLRELGATIHYLRREGFYPLSIHGNGLAGGTVRLSGQMSSQYISGLLIAAPYADTPVTITVQGSIVQHAYVFLTLHLMKSFGAQVEYDQQLQTIVVHPTPYTCQDIDLEADASTACYFLALAALTKGRIRLNNLTASTTQPDLHMLTVFEKMGCTVTRGSSFIELEGVSQLKGGFQISMNEMSDQALTLAAIAPFADGPITITDVEHIRYHESDRIAVICEALTRLGIQVDEFEDGLTVYPGTPKPTLHPLSTYDDHRVAMSLSLIGTKVKGLRLNDPGCVAKTCPSYFQLLEQLGIQVHYQ.

3-phosphoshikimate-binding residues include K40, S41, and R45. K40 is a phosphoenolpyruvate binding site. Positions 109 and 138 each coordinate phosphoenolpyruvate. 5 residues coordinate 3-phosphoshikimate: S184, S185, Q186, D329, and H356. Q186 serves as a coordination point for phosphoenolpyruvate. D329 functions as the Proton acceptor in the catalytic mechanism. R360, R403, and K428 together coordinate phosphoenolpyruvate.

It belongs to the EPSP synthase family. In terms of assembly, monomer.

Its subcellular location is the cytoplasm. The catalysed reaction is 3-phosphoshikimate + phosphoenolpyruvate = 5-O-(1-carboxyvinyl)-3-phosphoshikimate + phosphate. The protein operates within metabolic intermediate biosynthesis; chorismate biosynthesis; chorismate from D-erythrose 4-phosphate and phosphoenolpyruvate: step 6/7. Catalyzes the transfer of the enolpyruvyl moiety of phosphoenolpyruvate (PEP) to the 5-hydroxyl of shikimate-3-phosphate (S3P) to produce enolpyruvyl shikimate-3-phosphate and inorganic phosphate. The sequence is that of 3-phosphoshikimate 1-carboxyvinyltransferase 2 from Halalkalibacterium halodurans (strain ATCC BAA-125 / DSM 18197 / FERM 7344 / JCM 9153 / C-125) (Bacillus halodurans).